The chain runs to 84 residues: Large ribosomal subunit protein bL27 (84 aa).

The interval 1–22 (MAHKKGASSTRNGRDSNAQRLG) is disordered. Residues 7–19 (ASSTRNGRDSNAQ) are compositionally biased toward polar residues.

The protein belongs to the bacterial ribosomal protein bL27 family.

The chain is Large ribosomal subunit protein bL27 from Streptomyces coelicolor (strain ATCC BAA-471 / A3(2) / M145).